The following is a 300-amino-acid chain: Ribosomal protein L11 methyltransferase (300 aa).

S-adenosyl-L-methionine-binding residues include T152, G173, D195, and N234.

It belongs to the methyltransferase superfamily. PrmA family.

It localises to the cytoplasm. It carries out the reaction L-lysyl-[protein] + 3 S-adenosyl-L-methionine = N(6),N(6),N(6)-trimethyl-L-lysyl-[protein] + 3 S-adenosyl-L-homocysteine + 3 H(+). In terms of biological role, methylates ribosomal protein L11. This is Ribosomal protein L11 methyltransferase from Burkholderia orbicola (strain MC0-3).